A 485-amino-acid chain; its full sequence is MVISLSPNGSGRLNHQTTNLSNSLLTTLPYLPNSPLFGTDGIRGKAGELLTAPFALQLGFWAGQVLKSKTTTPGPVMIGQDSRNSSDMLAMAMAAGLTSAGLEVWQLGLCPTPCVAYLTRHSEAIAGIMISASHNPPEDNGIKFFNTDGTKLSSSLGQEIEDGLRGNLLLSVDEIAAWGKILYEPTLVNTYCQFLQDSLPPSLSCQGMKIVLDLAWGASVNVAPAMFKALGAEVICLHETANGDRINVNCGSTHLHVLQAAIQEHQADMGFAFDGDADRVMAVDSTGKVVDGDYILYLWGKSLLERGNLPNNLLIGTVMANLGFERAWQGLGGQLVRTSVGDRYVQSQMWETGAMLGGEQSGHIICHHYGVSGDGVQTALHLAALVHESGVSLAELVKNSFDTYPQILRNVRLEDREKLRYWQECQPLQQAIAQAEVGMGETGRVLVRASGTEPLIRVMVESECPDAANYWVNYLVGIVETHLAV.

The active-site Phosphoserine intermediate is serine 133. Mg(2+) is bound by residues serine 133, aspartate 274, aspartate 276, and aspartate 278. Serine 133 is subject to Phosphoserine.

Belongs to the phosphohexose mutase family. Requires Mg(2+) as cofactor. Activated by phosphorylation.

It catalyses the reaction alpha-D-glucosamine 1-phosphate = D-glucosamine 6-phosphate. Its function is as follows. Catalyzes the conversion of glucosamine-6-phosphate to glucosamine-1-phosphate. The chain is Phosphoglucosamine mutase from Crocosphaera subtropica (strain ATCC 51142 / BH68) (Cyanothece sp. (strain ATCC 51142)).